Here is a 401-residue protein sequence, read N- to C-terminus: 8-amino-7-oxononanoate synthase (401 aa).

Arginine 24 contributes to the substrate binding site. Pyridoxal 5'-phosphate is bound at residue 111–112 (GF). Histidine 137 contributes to the substrate binding site. Serine 183, histidine 211, and threonine 240 together coordinate pyridoxal 5'-phosphate. An N6-(pyridoxal phosphate)lysine modification is found at lysine 243. Threonine 357 is a substrate binding site.

The protein belongs to the class-II pyridoxal-phosphate-dependent aminotransferase family. BioF subfamily. Homodimer. Pyridoxal 5'-phosphate is required as a cofactor.

The enzyme catalyses 6-carboxyhexanoyl-[ACP] + L-alanine + H(+) = (8S)-8-amino-7-oxononanoate + holo-[ACP] + CO2. Its pathway is cofactor biosynthesis; biotin biosynthesis. Its function is as follows. Catalyzes the decarboxylative condensation of pimeloyl-[acyl-carrier protein] and L-alanine to produce 8-amino-7-oxononanoate (AON), [acyl-carrier protein], and carbon dioxide. The chain is 8-amino-7-oxononanoate synthase from Xanthomonas oryzae pv. oryzae (strain MAFF 311018).